Here is a 79-residue protein sequence, read N- to C-terminus: Small proline-rich protein 4 (79 aa).

Over residues 1–26 (MSSQQQQRQQQQCPPQRAQQQQVKQP) the composition is skewed to low complexity. The tract at residues 1-79 (MSSQQQQRQQ…AQQASKSKQK (79 aa)) is disordered. The segment covering 66–79 (KCPSAQQASKSKQK) has biased composition (polar residues).

The protein belongs to the cornifin (SPRR) family. Cross-linked to membrane proteins by transglutaminase.

It is found in the cytoplasm. The protein localises to the cell cortex. In terms of biological role, cross-linked envelope protein of keratinocytes. Involved in UV-induced cornification. This is Small proline-rich protein 4 (SPRR4) from Homo sapiens (Human).